A 439-amino-acid polypeptide reads, in one-letter code: SET domain-containing protein 4 (439 aa).

The segment covering 1–19 (MQRRRGRTERARKRRRRSS) has biased composition (basic residues). Positions 1-25 (MQRRRGRTERARKRRRRSSGSRAVN) are disordered. Residues 47–272 (TDLVPASFPG…KHQEVFICYG (226 aa)) enclose the SET domain. Tyrosine 271 contacts S-adenosyl-L-methionine.

The protein belongs to the class V-like SAM-binding methyltransferase superfamily. SETD4 family. In terms of assembly, forms a ternary complex with TBK1 and ZNF268; the interaction with TBK1 is ZNF268-dependent and leads to TBK1 monomethylation. Expressed in the forebrain subventricular zone, in quiescent neural stem cells.

It is found in the cytoplasm. Its subcellular location is the cytosol. The protein resides in the nucleus. The catalysed reaction is L-lysyl(4)-[histone H3] + S-adenosyl-L-methionine = N(6)-methyl-L-lysyl(4)-[histone H3] + S-adenosyl-L-homocysteine + H(+). It catalyses the reaction N(6)-methyl-L-lysyl(4)-[histone H3] + S-adenosyl-L-methionine = N(6),N(6)-dimethyl-L-lysyl(4)-[histone H3] + S-adenosyl-L-homocysteine + H(+). The enzyme catalyses L-lysyl(20)-[histone H4] + S-adenosyl-L-methionine = N(6)-methyl-L-lysyl(20)-[histone H4] + S-adenosyl-L-homocysteine + H(+). It carries out the reaction N(6)-methyl-L-lysyl(20)-[histone H4] + S-adenosyl-L-methionine = N(6),N(6)-dimethyl-L-lysyl(20)-[histone H4] + S-adenosyl-L-homocysteine + H(+). The catalysed reaction is N(6),N(6)-dimethyl-L-lysyl(20)-[histone H4] + S-adenosyl-L-methionine = N(6),N(6),N(6)-trimethyl-L-lysyl(20)-[histone H4] + S-adenosyl-L-homocysteine + H(+). It catalyses the reaction L-lysyl-[protein] + S-adenosyl-L-methionine = N(6)-methyl-L-lysyl-[protein] + S-adenosyl-L-homocysteine + H(+). In terms of biological role, protein-lysine N-methyltransferase that methylates both histones and non-histone proteins. Via its catalytic activity, regulates many processes, including cell proliferation, cell differentiation, inflammatory response and apoptosis. Regulates the inflammatory response by mediating mono- and dimethylation of 'Lys-4' of histone H3 (H3K4me1 and H3K4me2, respectively), leading to activate the transcription of pro-inflammatory cytokines IL6 and TNF-alpha. Also involved in the regulation of stem cell quiescence by catalyzing the trimethylation of 'Lys-20' of histone H4 (H4K20me3), thereby promoting heterochromatin formation. In the brain, epigenetically controls quiescence of neural stem cells for sustaining a protected neural stem cell population and maintaining a stem cell reservoir for neurogenesis. Involved in proliferation, migration, paracrine and myogenic differentiation of bone marrow mesenchymal stem cells (BMSCs). Through the catalysis of XRCC5/Ku70 trimethylation, regulates BAX-mediated apoptosis. SETD4-catalyzed XRCC5 methylation results in XRCC5 translocation to the cytoplasm, where it interacts with BAX, sequestering it from the mitochondria, hence preventing BAX-mediated apoptosis. In Mus musculus (Mouse), this protein is SET domain-containing protein 4.